Consider the following 337-residue polypeptide: Transaldolase (337 aa).

Lys-115 is subject to N6-acetyllysine. The active-site Schiff-base intermediate with substrate is Lys-142. Lys-219 carries the N6-acetyllysine modification. A phosphoserine mark is found at Ser-237 and Ser-256. Residues Lys-269, Lys-286, and Lys-321 each carry the N6-acetyllysine modification.

The protein belongs to the transaldolase family. Type 1 subfamily. Homodimer.

The protein localises to the cytoplasm. It catalyses the reaction D-sedoheptulose 7-phosphate + D-glyceraldehyde 3-phosphate = D-erythrose 4-phosphate + beta-D-fructose 6-phosphate. It functions in the pathway carbohydrate degradation; pentose phosphate pathway; D-glyceraldehyde 3-phosphate and beta-D-fructose 6-phosphate from D-ribose 5-phosphate and D-xylulose 5-phosphate (non-oxidative stage): step 2/3. Transaldolase is important for the balance of metabolites in the pentose-phosphate pathway. The sequence is that of Transaldolase (TALDO1) from Bos taurus (Bovine).